The primary structure comprises 332 residues: Malate dehydrogenase, cytoplasmic (332 aa).

NAD(+)-binding positions include 16-17 (QI), aspartate 43, and glycine 90. Arginine 99 contributes to the oxaloacetate binding site. Glutamine 113 and asparagine 132 together coordinate NAD(+). Residues asparagine 132, arginine 163, histidine 188, and serine 243 each coordinate oxaloacetate. Residue histidine 188 is the Proton acceptor of the active site.

This sequence belongs to the LDH/MDH superfamily. MDH type 2 family. As to quaternary structure, monomer. As to expression, expressed constitutively in roots.

The protein resides in the cell membrane. The enzyme catalyses (S)-malate + NAD(+) = oxaloacetate + NADH + H(+). Its function is as follows. Malate dehydrogenase; catalyzes a reversible NAD-dependent dehydrogenase reaction involved in central metabolism and redox homeostasis. In Zea mays (Maize), this protein is Malate dehydrogenase, cytoplasmic.